The chain runs to 39 residues: Cytochrome b6-f complex subunit 5 (39 aa).

Residues 5-25 (LLSGIVLGLVPVTILGLFVTA) form a helical membrane-spanning segment.

It belongs to the PetG family. As to quaternary structure, the 4 large subunits of the cytochrome b6-f complex are cytochrome b6, subunit IV (17 kDa polypeptide, PetD), cytochrome f and the Rieske protein, while the 4 small subunits are PetG, PetL, PetM and PetN. The complex functions as a dimer.

It is found in the plastid. The protein localises to the chloroplast thylakoid membrane. Functionally, component of the cytochrome b6-f complex, which mediates electron transfer between photosystem II (PSII) and photosystem I (PSI), cyclic electron flow around PSI, and state transitions. PetG is required for either the stability or assembly of the cytochrome b6-f complex. This chain is Cytochrome b6-f complex subunit 5, found in Pleurastrum terricola (Filamentous green alga).